Consider the following 330-residue polypeptide: tRNA N6-adenosine threonylcarbamoyltransferase (330 aa).

Residues His110 and His114 each coordinate Fe cation. Residues 133–137 (LVSGG), Asp166, Gly179, and Asn268 contribute to the substrate site. Asp296 contributes to the Fe cation binding site.

The protein belongs to the KAE1 / TsaD family. It depends on Fe(2+) as a cofactor.

It localises to the cytoplasm. It carries out the reaction L-threonylcarbamoyladenylate + adenosine(37) in tRNA = N(6)-L-threonylcarbamoyladenosine(37) in tRNA + AMP + H(+). Required for the formation of a threonylcarbamoyl group on adenosine at position 37 (t(6)A37) in tRNAs that read codons beginning with adenine. Is involved in the transfer of the threonylcarbamoyl moiety of threonylcarbamoyl-AMP (TC-AMP) to the N6 group of A37, together with TsaE and TsaB. TsaD likely plays a direct catalytic role in this reaction. The protein is tRNA N6-adenosine threonylcarbamoyltransferase of Kosmotoga olearia (strain ATCC BAA-1733 / DSM 21960 / TBF 19.5.1).